We begin with the raw amino-acid sequence, 355 residues long: Probable poly-beta-1,6-N-acetyl-D-glucosamine export protein (355 aa).

The next 10 helical transmembrane spans lie at 13–30 (AFICVIIIVTHLLTQITL), 45–67 (YIRNIFIFGTPSFIILSQLLTTL), 74–96 (INYLFSRFKYIFIPYLLIGLFYS), 116–138 (VLGQWYGYFIIIIMQFFVLSYII), 145–167 (LFNSKILLLLAFIVQQSYLHYFL), 187–204 (MILGWIFYFFLGGYIGYN), 211–233 (FLEKYLIIVIMLTLGAYVLFIAV), 243–262 (SFTYTLTLYNSVMFFLLLGV), 269–291 (MLLNTIKAISAFSFFIYLLHPII), and 306–328 (TIVFLAISLLMILGICIGVGMML).

This sequence belongs to the acyltransferase 3 family.

The protein localises to the cell membrane. In terms of biological role, presumably involved in the export of the biofilm adhesin polysaccharide poly-beta-1,6-N-acetyl-D-glucosamine (PNAG, also referred to as PIA) across the cell membrane. This is Probable poly-beta-1,6-N-acetyl-D-glucosamine export protein (icaC) from Staphylococcus epidermidis.